A 238-amino-acid polypeptide reads, in one-letter code: Uridylate kinase (238 aa).

12-15 (KLSG) lines the ATP pocket. The segment at 20–25 (GEKGFG) is involved in allosteric activation by GTP. Residue Gly-54 coordinates UMP. ATP is bound by residues Gly-55 and Arg-59. UMP-binding positions include Asp-72 and 133–140 (TGNPYFST). The ATP site is built by Tyr-166 and Asp-169.

This sequence belongs to the UMP kinase family. As to quaternary structure, homohexamer.

It is found in the cytoplasm. It catalyses the reaction UMP + ATP = UDP + ADP. Its pathway is pyrimidine metabolism; CTP biosynthesis via de novo pathway; UDP from UMP (UMPK route): step 1/1. With respect to regulation, allosterically activated by GTP. Inhibited by UTP. Functionally, catalyzes the reversible phosphorylation of UMP to UDP. The protein is Uridylate kinase of Clostridium botulinum (strain Hall / ATCC 3502 / NCTC 13319 / Type A).